The chain runs to 161 residues: Large ribosomal subunit protein uL10 (161 aa).

This sequence belongs to the universal ribosomal protein uL10 family. As to quaternary structure, part of the ribosomal stalk of the 50S ribosomal subunit. The N-terminus interacts with L11 and the large rRNA to form the base of the stalk. The C-terminus forms an elongated spine to which L12 dimers bind in a sequential fashion forming a multimeric L10(L12)X complex.

Forms part of the ribosomal stalk, playing a central role in the interaction of the ribosome with GTP-bound translation factors. The polypeptide is Large ribosomal subunit protein uL10 (rplJ) (Wigglesworthia glossinidia brevipalpis).